The following is a 29-amino-acid chain: Cytochrome b6-f complex subunit 8 (29 aa).

The helical transmembrane segment at 3–23 threads the bilayer; the sequence is ILTLGWVSVLTLFTYSIAMVV.

The protein belongs to the PetN family. The 4 large subunits of the cytochrome b6-f complex are cytochrome b6, subunit IV (17 kDa polypeptide, PetD), cytochrome f and the Rieske protein, while the 4 small subunits are PetG, PetL, PetM and PetN. The complex functions as a dimer.

It localises to the cellular thylakoid membrane. Functionally, component of the cytochrome b6-f complex, which mediates electron transfer between photosystem II (PSII) and photosystem I (PSI), cyclic electron flow around PSI, and state transitions. The chain is Cytochrome b6-f complex subunit 8 from Acaryochloris marina (strain MBIC 11017).